Reading from the N-terminus, the 456-residue chain is Short chain dehydrogenase tazN (456 aa).

Residues V45, D99, N126, R160, Y195, K199, and T229 each contribute to the NADP(+) site. The Proton donor role is filled by Y195. Catalysis depends on K199, which acts as the Lowers pKa of active site Tyr.

It belongs to the short-chain dehydrogenases/reductases (SDR) family.

The protein operates within secondary metabolite biosynthesis. Short chain dehydrogenase; part of the gene cluster that mediates the biosynthesis of azaterrilone A and other azaphilones, a class of fungal metabolites characterized by a highly oxygenated pyrano-quinone bicyclic core and exhibiting a broad range of bioactivities. The first step of the pathway begins with the non-reducing polyketide synthase tazA that assembles one acetyl-CoA starter unit, five malonyl-CoA units, and catalyzes a series of Claisen condensations, methylation, PT-mediated cyclization, and finally releases the first hexaketide precursor through the R-domain. The tazA product then undergoes reduction on its terminal ketone and the following pyran-ring formation by yet undetermined enzyme(s). Dehydration and enoyl reduction, possibly involving the trans-enoyl reductase tazE leads to the next intermediate. TazD is predicted as an acetyltransferase and might catalyze the acetylation steps leading to the synthesis of azaterrilone A. Azaterrilone A is not the final product of the taz pathway and both the highly reducing polyketide synthase tazB and the dual enzyme tazHJ catalyze late steps of the pathway, leading to the production of the 2 final stereoisomers that contain additional polyketide modification whose structures have still to be determined. This chain is Short chain dehydrogenase tazN, found in Aspergillus terreus (strain NIH 2624 / FGSC A1156).